Here is a 513-residue protein sequence, read N- to C-terminus: MLENTAIIIAITTGFVAFIGGYFLRKLLGEMKITSAEERARLVLEEAAKEAESKKREAVVEAKEEILKLRNEVERESRERRSELQRQERRLVQKEESLDRKLEALEKKEENLAKRETELAKMHEELKALHQKELQELERISGLSTEEARQILLQDVEKEIQQEAALLVKEIEGRAKEEADRRARNIISLAIQRCAADHVAESTVAVIPLPNEEMKGRIIGREGRNIRAFETLTGVDLIIDDTPEAVIVSGFDPIRRETARMALEKLISDGRIHPARIEEMVEKARKDMEVQIRDTGEQAAFDANVHGLHPDLIKLLGRLKYRTSYGQNVLKHSVEVAYLAGLMAAELRADEKLARRAGLLHDVGKAVDHEVEGPHVTIGVDLAKKYGESPEVLHAIAAHHGDEEPETVEAVLIQAADAISAARPGARRETLEAYVKRLTKLEDIANSFPGVEKAFAIQAGREIRIMVKPDKVDDLGAVRLVRDIARKIENELEYPGQIKVVIIRETRVVEYAK.

A helical transmembrane segment spans residues 4–24 (NTAIIIAITTGFVAFIGGYFL). The KH domain maps to 203 to 266 (TVAVIPLPNE…ETARMALEKL (64 aa)). One can recognise an HD domain in the interval 329–422 (VLKHSVEVAY…IQAADAISAA (94 aa)).

Belongs to the RNase Y family.

The protein resides in the cell membrane. Functionally, endoribonuclease that initiates mRNA decay. The chain is Ribonuclease Y from Desulforudis audaxviator (strain MP104C).